Here is a 267-residue protein sequence, read N- to C-terminus: MQTRTTPGAMLKAMREKPPLVQCITNYVAMNIAANVLLAAGASPAMVHAAEEAGEFAAIASALTINIGTLSTQWIDGMQAAAKAATSAGKPWVLDPVAHYATAFRRNAVAELLALKPTIIRGNASEIIALAGGESRGQGVDSRDPVEQAEGSARWLAERQRAVVAVTGAVDFVTDGERAVRIEGGSALMPQVTALGCSLTCLVGAFAATAPEDIFGATVAALSTFAIAGEEAALGAAGPGSFSWRFLDALAALDAETLDARARISAA.

Met-46 contacts substrate. ATP contacts are provided by Arg-121 and Thr-167. Substrate is bound at residue Ala-194.

The protein belongs to the Thz kinase family. Mg(2+) is required as a cofactor.

The catalysed reaction is 5-(2-hydroxyethyl)-4-methylthiazole + ATP = 4-methyl-5-(2-phosphooxyethyl)-thiazole + ADP + H(+). It functions in the pathway cofactor biosynthesis; thiamine diphosphate biosynthesis; 4-methyl-5-(2-phosphoethyl)-thiazole from 5-(2-hydroxyethyl)-4-methylthiazole: step 1/1. Catalyzes the phosphorylation of the hydroxyl group of 4-methyl-5-beta-hydroxyethylthiazole (THZ). The sequence is that of Hydroxyethylthiazole kinase from Rhizobium johnstonii (strain DSM 114642 / LMG 32736 / 3841) (Rhizobium leguminosarum bv. viciae).